The primary structure comprises 570 residues: MSSSGGGGVAEEVARLWGELPVRVVWAAVAAQWAAAAAAARAAVVVPAVRALVAVSLAMTVMILAEKLFVAAVCLAVRAFRLRPDRRYKWLPIGAAAAAASSEDDEESGLVAAAAAFPMVLVQIPMFNEREVYKLSIGAACSLDWPSDRVVIQVLDDSTDLVVKDLVEKECQKWQGKGVNIKYEVRGNRKGYKAGALKEGLKHDYVKECEYIAMFDADFQPESDFLLRTVPFLVHNSEIALVQTRWKFVNANECLLTRFQEMSLDYHFKYEQEAGSSVYSFFGFNGTAGVWRIAAIDDAGGWKDRTTVEDMDLAVRATLQGWKFVYVGDVKVKSELPSTFKAYRFQQHRWSCGPANLFKKMMVEILENKKVSFWNKIHLWYDFFFVGKIAAHTVTFIYYCFVIPVSVWLPEIEIPLWGVVYVPTVITLCKAVGTPSSFHLVILWVLFENVMSLHRIKAAVTGILEAGRVNEWVVTEKLGDANKTKPDTNGSDAVKVIDVELTTPLIPKLKKRRTRFWDKYHYSEIFVGICIILSGFYDVLYAKKGYYIFLFIQGLAFLIVGFDYIGVCPP.

The helical transmembrane segment at 57–77 (LAMTVMILAEKLFVAAVCLAV) threads the bilayer. Residue Asp157 is part of the active site. Residues Asp216 and Asp218 each coordinate substrate. Asp310 is a catalytic residue. The next 4 membrane-spanning stretches (helical) occupy residues 389 to 409 (IAAHTVTFIYYCFVIPVSVWL), 412 to 432 (IEIPLWGVVYVPTVITLCKAV), 522 to 542 (YSEIFVGICIILSGFYDVLYA), and 548 to 568 (IFLFIQGLAFLIVGFDYIGVC).

The protein belongs to the glycosyltransferase 2 family. Plant cellulose synthase-like A subfamily.

It localises to the golgi apparatus membrane. It carries out the reaction GDP-mannose + (glucomannan)n = GDP + (glucomannan)n+1.. Functionally, probable mannan synthase which consists of a 4-beta-mannosyltransferase activity on mannan using GDP-mannose. The beta-1,4-mannan product is the backbone for galactomannan synthesis by galactomannan galactosyltransferase. Galactomannan is a noncellulosic polysaccharides of plant cell wall. This Oryza sativa subsp. japonica (Rice) protein is Probable glucomannan 4-beta-mannosyltransferase 11.